The sequence spans 414 residues: Carboxyl-terminal-processing protease (414 aa).

The first 29 residues, 1 to 29, serve as a signal peptide directing secretion; the sequence is MLRKRLQAGLCSLLLVLVLVFGPMERAIA. Residues 100–184 enclose the PDZ domain; that stretch reads YRSLKVSTSG…STVSLTVKSP (85 aa). Active-site charge relay system residues include Ser310, Asp321, and Lys335.

The protein belongs to the peptidase S41A family.

Its subcellular location is the cellular thylakoid lumen. It catalyses the reaction The enzyme shows specific recognition of a C-terminal tripeptide, Xaa-Yaa-Zaa, in which Xaa is preferably Ala or Leu, Yaa is preferably Ala or Tyr, and Zaa is preferably Ala, but then cleaves at a variable distance from the C-terminus. A typical cleavage is -Ala-Ala-|-Arg-Ala-Ala-Lys-Glu-Asn-Tyr-Ala-Leu-Ala-Ala.. In terms of biological role, cleavage of the 16 C-terminal residues from the D1 precursor of photosystem II (PSII). This proteolytic processing is necessary to allow the light-driven assembly of the oxygen-evolving cluster (a tetranuclear manganese), which is responsible for photosynthetic water oxidation. In Picosynechococcus sp. (strain ATCC 27264 / PCC 7002 / PR-6) (Agmenellum quadruplicatum), this protein is Carboxyl-terminal-processing protease (ctpA).